We begin with the raw amino-acid sequence, 500 residues long: Coiled-coil domain-containing protein 85A (500 aa).

Residues 1–23 (MSKAAGGSAPAAESCPSAPAGAS) show a composition bias toward low complexity. Residues 1–30 (MSKAAGGSAPAAESCPSAPAGASTPTGVDD) are disordered. Coiled coils occupy residues 38-104 (ELLQ…RDLC) and 132-171 (MHKEVALYLQKLKELEVKQEEVVKENMELKELCMLLDEEK). Disordered stretches follow at residues 200–405 (RDVG…SGMN) and 426–465 (NRMLPQGSFRLSSGADGNNSSLNSPASFSGHTTPSQQPEP). Residues 204-215 (DGSSTSSTGSTD) are compositionally biased toward low complexity. Residues 231–254 (HLQKPRSEGSPEHTKHRSTSPEHL) are compositionally biased toward basic and acidic residues. Positions 372-381 (GSGGSGGGSR) are enriched in gly residues. Residues 383-395 (GTLRRPAQEDSSS) show a composition bias toward basic and acidic residues. Positions 404–429 (MNESTLSYVRQLEARVRQLEEENRML) form a coiled coil. Residues 434–463 (FRLSSGADGNNSSLNSPASFSGHTTPSQQP) are compositionally biased toward polar residues. Arg488 carries the post-translational modification Asymmetric dimethylarginine.

This sequence belongs to the CCDC85 family. In terms of assembly, may interact with ARVCF; CTNND1; CTNND2 and PKP4.

Its subcellular location is the cell junction. The protein resides in the adherens junction. In terms of biological role, may play a role in cell-cell adhesion and epithelium development through its interaction with proteins of the beta-catenin family. This chain is Coiled-coil domain-containing protein 85A (Ccdc85a), found in Mus musculus (Mouse).